Reading from the N-terminus, the 242-residue chain is Type III pantothenate kinase (242 aa).

Position 7-14 (7-14) interacts with ATP; sequence DLGNSRFK. Residues Y91 and 98 to 101 each bind substrate; that span reads GVDR. The active-site Proton acceptor is D100. T121 is an ATP binding site. T171 is a binding site for substrate.

It belongs to the type III pantothenate kinase family. As to quaternary structure, homodimer. It depends on NH4(+) as a cofactor. Requires K(+) as cofactor.

It is found in the cytoplasm. The enzyme catalyses (R)-pantothenate + ATP = (R)-4'-phosphopantothenate + ADP + H(+). It functions in the pathway cofactor biosynthesis; coenzyme A biosynthesis; CoA from (R)-pantothenate: step 1/5. In terms of biological role, catalyzes the phosphorylation of pantothenate (Pan), the first step in CoA biosynthesis. The chain is Type III pantothenate kinase from Xylella fastidiosa (strain M23).